The chain runs to 136 residues: Histone H2B.5 (136 aa).

Over residues 1 to 36 (MAPKAEKKPAAEKKPVETEKKPKAEKRVPGKDGGAD) the composition is skewed to basic and acidic residues. The tract at residues 1–44 (MAPKAEKKPAAEKKPVETEKKPKAEKRVPGKDGGADKKKKKAKK) is disordered. An N6-acetyllysine mark is found at Lys7 and Lys26. Lys132 is covalently cross-linked (Glycyl lysine isopeptide (Lys-Gly) (interchain with G-Cter in ubiquitin)).

This sequence belongs to the histone H2B family. The nucleosome is a histone octamer containing two molecules each of H2A, H2B, H3 and H4 assembled in one H3-H4 heterotetramer and two H2A-H2B heterodimers. The octamer wraps approximately 147 bp of DNA. In terms of processing, can be acetylated to form H2BK6ac and H2BK33ac. Post-translationally, monoubiquitinated to form H2BK143ub1; may give a specific tag for epigenetic transcriptional activation.

The protein localises to the nucleus. The protein resides in the chromosome. Its function is as follows. Core component of nucleosome. Nucleosomes wrap and compact DNA into chromatin, limiting DNA accessibility to the cellular machineries which require DNA as a template. Histones thereby play a central role in transcription regulation, DNA repair, DNA replication and chromosomal stability. DNA accessibility is regulated via a complex set of post-translational modifications of histones, also called histone code, and nucleosome remodeling. This chain is Histone H2B.5, found in Triticum aestivum (Wheat).